The sequence spans 376 residues: Dihydroorotate dehydrogenase (quinone) (376 aa).

FMN is bound by residues 74 to 78 and Thr-98; that span reads AGFDK. Lys-78 contributes to the substrate binding site. Residue 123-127 coordinates substrate; that stretch reads NHMGF. Asn-152 and Asn-185 together coordinate FMN. Asn-185 lines the substrate pocket. Ser-188 functions as the Nucleophile in the catalytic mechanism. Asn-190 is a substrate binding site. Residues Lys-223 and Thr-251 each coordinate FMN. 252 to 253 lines the substrate pocket; the sequence is NT. FMN contacts are provided by residues Gly-280, Gly-309, and 330-331; that span reads YT. Positions 352–376 are disordered; the sequence is RNPAPSSPERMPTGIQSGRKIVMDP.

The protein belongs to the dihydroorotate dehydrogenase family. Type 2 subfamily. In terms of assembly, monomer. Requires FMN as cofactor.

Its subcellular location is the cell membrane. It catalyses the reaction (S)-dihydroorotate + a quinone = orotate + a quinol. It participates in pyrimidine metabolism; UMP biosynthesis via de novo pathway; orotate from (S)-dihydroorotate (quinone route): step 1/1. Catalyzes the conversion of dihydroorotate to orotate with quinone as electron acceptor. This chain is Dihydroorotate dehydrogenase (quinone), found in Synechococcus sp. (strain JA-3-3Ab) (Cyanobacteria bacterium Yellowstone A-Prime).